The chain runs to 218 residues: MTQDEMKKAAGWAALKYVEKGSIVGVGTGSTVNHFIDALGTMSEEIKGAVSSSVASTEKLEALGIKIFDCNEVASLDIYVDGADEINADREMIKGGGAALTREKIVAAIADKFICIVDGTKAVDVLGTFPLPVEVIPMARSYVARQLVKLGGDPCYREGVITDNGNVILDVYGMKITNPKQLEDQINAIPGVVTVGLFAHRGADVVITGTPEGAKIEE.

Substrate is bound by residues K7, 28-31 (TGST), 81-84 (DGAD), and 94-97 (KGGG). Residue E103 is the Proton acceptor of the active site. K121 is a binding site for substrate.

It belongs to the ribose 5-phosphate isomerase family. Homodimer.

It carries out the reaction aldehydo-D-ribose 5-phosphate = D-ribulose 5-phosphate. It participates in carbohydrate degradation; pentose phosphate pathway; D-ribose 5-phosphate from D-ribulose 5-phosphate (non-oxidative stage): step 1/1. In terms of biological role, catalyzes the reversible conversion of ribose-5-phosphate to ribulose 5-phosphate. This is Ribose-5-phosphate isomerase A from Vibrio vulnificus (strain YJ016).